The primary structure comprises 505 residues: Glycerol kinase 3 (505 aa).

ADP is bound at residue Thr-12. ATP-binding residues include Thr-12, Thr-13, and Ser-14. Thr-12 is a binding site for sn-glycerol 3-phosphate. Arg-16 provides a ligand contact to ADP. Sn-glycerol 3-phosphate is bound by residues Arg-82, Glu-83, Tyr-134, and Asp-249. Glycerol is bound by residues Arg-82, Glu-83, Tyr-134, Asp-249, and Gln-250. ADP-binding residues include Thr-271 and Gly-315. ATP is bound by residues Thr-271, Gly-315, Gln-319, and Gly-416. Residues Gly-416 and Asn-420 each coordinate ADP.

The protein belongs to the FGGY kinase family.

It carries out the reaction glycerol + ATP = sn-glycerol 3-phosphate + ADP + H(+). It functions in the pathway polyol metabolism; glycerol degradation via glycerol kinase pathway; sn-glycerol 3-phosphate from glycerol: step 1/1. With respect to regulation, inhibited by fructose 1,6-bisphosphate (FBP). Its function is as follows. Key enzyme in the regulation of glycerol uptake and metabolism. Catalyzes the phosphorylation of glycerol to yield sn-glycerol 3-phosphate. The sequence is that of Glycerol kinase 3 from Streptomyces avermitilis (strain ATCC 31267 / DSM 46492 / JCM 5070 / NBRC 14893 / NCIMB 12804 / NRRL 8165 / MA-4680).